Consider the following 101-residue polypeptide: Ubiquitin-related modifier 1 homolog (101 aa).

A 1-thioglycine modification is found at G101. G101 participates in a covalent cross-link: Glycyl lysine isopeptide (Gly-Lys) (interchain with K-? in acceptor proteins).

Belongs to the URM1 family. As to quaternary structure, interacts with cer. C-terminal thiocarboxylation occurs in 2 steps, it is first acyl-adenylated (-COAMP) via the hesA/moeB/thiF part of the MOCS3 homolog, then thiocarboxylated (-COSH) via the rhodanese domain of the MOCS3 homolog.

It localises to the cytoplasm. The protein operates within tRNA modification; 5-methoxycarbonylmethyl-2-thiouridine-tRNA biosynthesis. In terms of biological role, acts as a sulfur carrier required for 2-thiolation of mcm(5)S(2)U at tRNA wobble positions of cytosolic tRNA(Lys), tRNA(Glu) and tRNA(Gln). Serves as sulfur donor in tRNA 2-thiolation reaction by being thiocarboxylated (-COSH) at its C-terminus by MOCS3. The sulfur is then transferred to tRNA to form 2-thiolation of mcm(5)S(2)U. Also acts as a ubiquitin-like protein (UBL) that is covalently conjugated via an isopeptide bond to lysine residues of target proteins such as Prx2/Jafrac1, Ciao1, Eip71CD and GILT1. The thiocarboxylated form serves as substrate for conjugation and oxidative stress specifically induces the formation of UBL-protein conjugates. The polypeptide is Ubiquitin-related modifier 1 homolog (Drosophila simulans (Fruit fly)).